The primary structure comprises 165 residues: Xanthine-guanine phosphoribosyltransferase (165 aa).

5-phospho-alpha-D-ribose 1-diphosphate-binding positions include 41–42 (RG) and 98–106 (DDLTDTGKT). Residue Asp-99 participates in Mg(2+) binding. Guanine-binding residues include Asp-102 and Ile-145. Residues Asp-102 and Ile-145 each contribute to the xanthine site. GMP is bound by residues 102-106 (DTGKT) and 144-145 (WI).

Belongs to the purine/pyrimidine phosphoribosyltransferase family. XGPT subfamily. Homotetramer. The cofactor is Mg(2+).

Its subcellular location is the cell inner membrane. The catalysed reaction is GMP + diphosphate = guanine + 5-phospho-alpha-D-ribose 1-diphosphate. The enzyme catalyses XMP + diphosphate = xanthine + 5-phospho-alpha-D-ribose 1-diphosphate. It catalyses the reaction IMP + diphosphate = hypoxanthine + 5-phospho-alpha-D-ribose 1-diphosphate. It functions in the pathway purine metabolism; GMP biosynthesis via salvage pathway; GMP from guanine: step 1/1. Its pathway is purine metabolism; XMP biosynthesis via salvage pathway; XMP from xanthine: step 1/1. In terms of biological role, purine salvage pathway enzyme that catalyzes the transfer of the ribosyl-5-phosphate group from 5-phospho-alpha-D-ribose 1-diphosphate (PRPP) to the N9 position of the 6-oxopurines guanine and xanthine to form the corresponding ribonucleotides GMP (guanosine 5'-monophosphate) and XMP (xanthosine 5'-monophosphate), with the release of PPi. To a lesser extent, also acts on hypoxanthine. The sequence is that of Xanthine-guanine phosphoribosyltransferase from Brucella anthropi (strain ATCC 49188 / DSM 6882 / CCUG 24695 / JCM 21032 / LMG 3331 / NBRC 15819 / NCTC 12168 / Alc 37) (Ochrobactrum anthropi).